The following is a 705-amino-acid chain: Solute carrier family 12 member 8 (705 aa).

The next 11 membrane-spanning stretches (helical) occupy residues 38-58 (FGTW…VVLF), 69-89 (GVLL…ITVL), 92-112 (IGVA…ISSV), 121-141 (VGLL…TGFA), 159-179 (ISVA…KWII), 181-201 (LQLL…VGSF), 232-252 (FFTV…GFNM), 268-288 (LAAV…LGAV), 306-326 (LVGF…CMGG), 368-388 (LVTM…VVTI), and 390-410 (FMLT…AHCG). The disordered stretch occupies residues 472 to 512 (ESRQLGSREGNNPKNQKRKGKKGAKQTLQDSFLLDPGSPLS). Residues 486–495 (NQKRKGKKGA) are compositionally biased toward basic residues. Transmembrane regions (helical) follow at residues 587-607 (WVSL…QWLY) and 612-632 (MGVA…LYLG).

This sequence belongs to the SLC12A transporter family.

It is found in the membrane. In terms of biological role, cation/chloride cotransporter that may play a role in the control of keratinocyte proliferation. The chain is Solute carrier family 12 member 8 (Slc12a8) from Mus musculus (Mouse).